The primary structure comprises 347 residues: Peptidoglycan recognition protein 3 (347 aa).

Positions methionine 1–glycine 26 are cleaved as a signal peptide. 2 N-acetylmuramoyl-L-alanine amidase domains span residues leucine 77–proline 185 and proline 206–isoleucine 328. The N-linked (GlcNAc...) asparagine glycan is linked to asparagine 120. 3 disulfides stabilise this stretch: cysteine 184–cysteine 306, cysteine 200–cysteine 244, and cysteine 220–cysteine 226. Residues histidine 237 and tyrosine 248 each coordinate peptidoglycan. Residues histidine 270 to asparagine 275 form an interaction with murein region.

This sequence belongs to the N-acetylmuramoyl-L-alanine amidase 2 family. In terms of assembly, monomer. Homodimer; disulfide-linked. Heterodimer with PGLYRP4; disulfide-linked. In terms of tissue distribution, detected in lung, spleen and stomach, and at low levels in eye, heart, thymus and testis.

The protein localises to the secreted. In terms of biological role, pattern receptor that binds to murein peptidoglycans (PGN) of Gram-positive bacteria. Has bactericidal activity towards Gram-positive bacteria. May kill Gram-positive bacteria by interfering with peptidoglycan biosynthesis. Also binds to Gram-negative bacteria, and has bacteriostatic activity towards Gram-negative bacteria. Plays a role in innate immunity. The chain is Peptidoglycan recognition protein 3 (Pglyrp3) from Mus musculus (Mouse).